We begin with the raw amino-acid sequence, 71 residues long: UPF0437 protein asl1434 (71 aa).

Belongs to the UPF0437 family.

This Nostoc sp. (strain PCC 7120 / SAG 25.82 / UTEX 2576) protein is UPF0437 protein asl1434.